A 517-amino-acid polypeptide reads, in one-letter code: Crotonobetaine/carnitine--CoA ligase (517 aa).

The protein belongs to the ATP-dependent AMP-binding enzyme family.

The catalysed reaction is 4-(trimethylamino)butanoate + ATP + CoA = 4-(trimethylamino)butanoyl-CoA + AMP + diphosphate. The enzyme catalyses crotonobetaine + ATP + CoA = crotonobetainyl-CoA + AMP + diphosphate. It carries out the reaction (R)-carnitine + ATP + CoA = (R)-carnitinyl-CoA + AMP + diphosphate. It participates in amine and polyamine metabolism; carnitine metabolism. Functionally, catalyzes the transfer of CoA to carnitine, generating the initial carnitinyl-CoA needed for the CaiB reaction cycle. Also has activity toward crotonobetaine and gamma-butyrobetaine. The protein is Crotonobetaine/carnitine--CoA ligase of Escherichia coli O45:K1 (strain S88 / ExPEC).